Reading from the N-terminus, the 274-residue chain is MAIVKCKPTSPGRRHVVKIVNADLHKGKPYAPLLEKNSKNGGRNNNGRITVRHVGGGHKQHYRLIDFKRTKDGIPAVVERLEYDPNRSANIALVLFADGERRYIIAPKGIQAGDTVQSGVDAPIKAGNCLPLRNIPVGSTVHCVELKPGKGAQIARSAGAYAQIIARDGAYVTLRLRSGEMRKVLSEGRATIGEVGNSEHMLRELGKAGATRWRGVRPTVRGVAMNPVDHPHGGGEGRTSGGRHPVSPWGMPTKGFKTRKNKSTDKYIVRRRNK.

The interval 223 to 274 is disordered; it reads VAMNPVDHPHGGGEGRTSGGRHPVSPWGMPTKGFKTRKNKSTDKYIVRRRNK.

This sequence belongs to the universal ribosomal protein uL2 family. Part of the 50S ribosomal subunit. Forms a bridge to the 30S subunit in the 70S ribosome.

In terms of biological role, one of the primary rRNA binding proteins. Required for association of the 30S and 50S subunits to form the 70S ribosome, for tRNA binding and peptide bond formation. It has been suggested to have peptidyltransferase activity; this is somewhat controversial. Makes several contacts with the 16S rRNA in the 70S ribosome. In Aliivibrio fischeri (strain ATCC 700601 / ES114) (Vibrio fischeri), this protein is Large ribosomal subunit protein uL2.